Here is a 386-residue protein sequence, read N- to C-terminus: Large ribosomal subunit protein uL4 (386 aa).

The segment covering 341-357 has biased composition (basic and acidic residues); the sequence is VEQRRLKEKQAKLDQKR. The disordered stretch occupies residues 341 to 386; that stretch reads VEQRRLKEKQAKLDQKRGIATPVEGAGKGRPRKTTAKPTKAKAGKK. Over residues 369 to 386 the composition is skewed to basic residues; it reads GRPRKTTAKPTKAKAGKK.

The protein belongs to the universal ribosomal protein uL4 family.

The chain is Large ribosomal subunit protein uL4 (RPL4) from Urechis caupo (Innkeeper worm).